The primary structure comprises 597 residues: Cytosolic Fe-S cluster assembly factor nar1 (597 aa).

The [4Fe-4S] cluster site is built by Cys20, Cys61, Cys64, Cys67, Cys209, and Cys264. The tract at residues 419 to 447 is disordered; it reads PARASRLPGARQSATSAGGSRRQLASRNA. A compositionally biased stretch (polar residues) spans 430 to 447; it reads QSATSAGGSRRQLASRNA. Positions 464 and 468 each coordinate [4Fe-4S] cluster. Residues 482–504 form a disordered region; it reads EAASNMSVESQTEPPEAALKPTP. A compositionally biased stretch (polar residues) spans 485–494; the sequence is SNMSVESQTE.

The protein belongs to the NARF family.

Its function is as follows. Component of the cytosolic Fe/S protein assembly machinery. Required for maturation of extramitochondrial Fe/S proteins. May play a role in the transfer of pre-assembled Fe/S clusters to target apoproteins. This is Cytosolic Fe-S cluster assembly factor nar1 (nar1) from Aspergillus clavatus (strain ATCC 1007 / CBS 513.65 / DSM 816 / NCTC 3887 / NRRL 1 / QM 1276 / 107).